A 312-amino-acid chain; its full sequence is Malate dehydrogenase (312 aa).

NAD(+) is bound by residues 10–15 (GAGNTG) and D34. Residues R85 and R91 each coordinate substrate. Residues N98 and 121–123 (LTN) each bind NAD(+). 2 residues coordinate substrate: N123 and R154. The active-site Proton acceptor is the H178.

Belongs to the LDH/MDH superfamily. MDH type 3 family.

The enzyme catalyses (S)-malate + NAD(+) = oxaloacetate + NADH + H(+). Functionally, catalyzes the reversible oxidation of malate to oxaloacetate. This chain is Malate dehydrogenase, found in Staphylococcus saprophyticus subsp. saprophyticus (strain ATCC 15305 / DSM 20229 / NCIMB 8711 / NCTC 7292 / S-41).